A 421-amino-acid chain; its full sequence is Probable pectate lyase C (421 aa).

The first 19 residues, 1–19 (MQPLHTLLALLPLCRSTTA), serve as a signal peptide directing secretion. N-linked (GlcNAc...) asparagine glycans are attached at residues Asn-164 and Asn-201. Arg-204 is a catalytic residue. Residues 257-292 (NENFHGYVENNYYDPDQDGTLNGNELGVSSSNYGGM) form the EF-hand domain. Positions 270, 272, 274, 276, and 281 each coordinate Ca(2+). Positions 353 to 376 (DFGGVGDLDGGETPTDTDGDGIPD) are disordered. Residues 367–376 (TDTDGDGIPD) show a composition bias toward acidic residues.

This sequence belongs to the polysaccharide lyase 1 family. The cofactor is Ca(2+).

It localises to the secreted. It catalyses the reaction Eliminative cleavage of (1-&gt;4)-alpha-D-galacturonan to give oligosaccharides with 4-deoxy-alpha-D-galact-4-enuronosyl groups at their non-reducing ends.. In terms of biological role, pectinolytic enzyme consist of four classes of enzymes: pectin lyase, polygalacturonase, pectin methylesterase and rhamnogalacturonase. Among pectinolytic enzymes, pectin lyase is the most important in depolymerization of pectin, since it cleaves internal glycosidic bonds of highly methylated pectins. Favors pectate, the anion, over pectin, the methyl ester. The chain is Probable pectate lyase C (plyC) from Emericella nidulans (strain FGSC A4 / ATCC 38163 / CBS 112.46 / NRRL 194 / M139) (Aspergillus nidulans).